The following is a 137-amino-acid chain: ATP synthase epsilon chain, sodium ion specific (137 aa).

The protein belongs to the ATPase epsilon chain family. F-type ATPases have 2 components, CF(1) - the catalytic core - and CF(0) - the membrane proton channel. CF(1) has five subunits: alpha(3), beta(3), gamma(1), delta(1), epsilon(1). CF(0) has three main subunits: a, b and c.

The protein resides in the cell inner membrane. Its function is as follows. Produces ATP from ADP in the presence of a sodium gradient across the membrane. This Propionigenium modestum protein is ATP synthase epsilon chain, sodium ion specific (atpC).